The chain runs to 663 residues: Protein MNE1 (663 aa).

The polypeptide is Protein MNE1 (MNE1) (Saccharomyces cerevisiae (strain ATCC 204508 / S288c) (Baker's yeast)).